A 126-amino-acid polypeptide reads, in one-letter code: Large ribosomal subunit protein uL22 (126 aa).

Belongs to the universal ribosomal protein uL22 family. In terms of assembly, part of the 50S ribosomal subunit.

This protein binds specifically to 23S rRNA; its binding is stimulated by other ribosomal proteins, e.g. L4, L17, and L20. It is important during the early stages of 50S assembly. It makes multiple contacts with different domains of the 23S rRNA in the assembled 50S subunit and ribosome. Its function is as follows. The globular domain of the protein is located near the polypeptide exit tunnel on the outside of the subunit, while an extended beta-hairpin is found that lines the wall of the exit tunnel in the center of the 70S ribosome. The protein is Large ribosomal subunit protein uL22 of Sphingopyxis alaskensis (strain DSM 13593 / LMG 18877 / RB2256) (Sphingomonas alaskensis).